A 712-amino-acid polypeptide reads, in one-letter code: Sterol uptake control protein 2 (712 aa).

A compositionally biased stretch (polar residues) spans 1–19 (MMMTVKQESPNSTLNTSEF). Residues 1-52 (MMMTVKQESPNSTLNTSEFSSDENLKTNNSEPPKKVSKSSTGKRKYHQKSRN) are disordered. Basic residues predominate over residues 35–50 (KVSKSSTGKRKYHQKS). Positions 54–81 (CSTCKKRRVKCDEQRPVCGNCTKLKLDC) form a DNA-binding region, zn(2)-C6 fungal-type. Disordered regions lie at residues 95-150 (KKDI…VIPP) and 236-342 (TTVP…ANPL). Polar residues-rich tracts occupy residues 113-143 (STVS…QDIK), 252-306 (RKSQ…SGSP), and 326-337 (KSLPNISPNMSI).

It is found in the nucleus. Functionally, transcription factor involved in the regulation of ergosterol biosynthetic genes such as ERG2 and ERG11 through direct binding to sterol response elements (SREs) in the promoters. Also binds to its own promoter on 2 cis-acting elements to promote autoregulation. Regulates sterol uptake across the plasma membrane. Acts as a major regulator of ascorbic acid-induced response. Plays a role in the triggering of pyroptosis, an inflammasome-mediated programmed cell death pathway in macrophages, allowing macrophages escaping. The polypeptide is Sterol uptake control protein 2 (Candida albicans (strain SC5314 / ATCC MYA-2876) (Yeast)).